The chain runs to 178 residues: Ribulose bisphosphate carboxylase small subunit, chloroplastic (178 aa).

The transit peptide at 1-54 directs the protein to the chloroplast; sequence MALISSAAVTTINRAPVQANLATPFTGLKSSAGFPVTKKNNDITSITSNGSRVN.

Belongs to the RuBisCO small chain family. Heterohexadecamer of 8 large and 8 small subunits.

Its subcellular location is the plastid. It is found in the chloroplast. RuBisCO catalyzes two reactions: the carboxylation of D-ribulose 1,5-bisphosphate, the primary event in carbon dioxide fixation, as well as the oxidative fragmentation of the pentose substrate. Both reactions occur simultaneously and in competition at the same active site. Although the small subunit is not catalytic it is essential for maximal activity. The polypeptide is Ribulose bisphosphate carboxylase small subunit, chloroplastic (Trifolium repens (Creeping white clover)).